A 110-amino-acid chain; its full sequence is NADH-quinone oxidoreductase subunit K (110 aa).

The next 3 helical transmembrane spans lie at L13–M33, I41–V61, and I73–Y93.

The protein belongs to the complex I subunit 4L family. As to quaternary structure, NDH-1 is composed of 14 different subunits. Subunits NuoA, H, J, K, L, M, N constitute the membrane sector of the complex.

The protein resides in the cell inner membrane. It catalyses the reaction a quinone + NADH + 5 H(+)(in) = a quinol + NAD(+) + 4 H(+)(out). Functionally, NDH-1 shuttles electrons from NADH, via FMN and iron-sulfur (Fe-S) centers, to quinones in the respiratory chain. The immediate electron acceptor for the enzyme in this species is believed to be ubiquinone. Couples the redox reaction to proton translocation (for every two electrons transferred, four hydrogen ions are translocated across the cytoplasmic membrane), and thus conserves the redox energy in a proton gradient. The protein is NADH-quinone oxidoreductase subunit K of Rickettsia typhi (strain ATCC VR-144 / Wilmington).